The following is a 170-amino-acid chain: 3-hydroxydecanoyl-[acyl-carrier-protein] dehydratase (170 aa).

Histidine 69 is an active-site residue.

It belongs to the thioester dehydratase family. FabA subfamily. In terms of assembly, homodimer.

It is found in the cytoplasm. It carries out the reaction a (3R)-hydroxyacyl-[ACP] = a (2E)-enoyl-[ACP] + H2O. The enzyme catalyses (3R)-hydroxydecanoyl-[ACP] = (2E)-decenoyl-[ACP] + H2O. It catalyses the reaction (2E)-decenoyl-[ACP] = (3Z)-decenoyl-[ACP]. It functions in the pathway lipid metabolism; fatty acid biosynthesis. Functionally, necessary for the introduction of cis unsaturation into fatty acids. Catalyzes the dehydration of (3R)-3-hydroxydecanoyl-ACP to E-(2)-decenoyl-ACP and then its isomerization to Z-(3)-decenoyl-ACP. Can catalyze the dehydratase reaction for beta-hydroxyacyl-ACPs with saturated chain lengths up to 16:0, being most active on intermediate chain length. This is 3-hydroxydecanoyl-[acyl-carrier-protein] dehydratase from Caulobacter vibrioides (strain ATCC 19089 / CIP 103742 / CB 15) (Caulobacter crescentus).